The sequence spans 452 residues: Phosphoglucosamine mutase (452 aa).

Catalysis depends on Ser-108, which acts as the Phosphoserine intermediate. Mg(2+)-binding residues include Ser-108, Asp-247, Asp-249, and Asp-251. Ser-108 carries the post-translational modification Phosphoserine.

This sequence belongs to the phosphohexose mutase family. Requires Mg(2+) as cofactor. In terms of processing, activated by phosphorylation.

It carries out the reaction alpha-D-glucosamine 1-phosphate = D-glucosamine 6-phosphate. Functionally, catalyzes the conversion of glucosamine-6-phosphate to glucosamine-1-phosphate. The sequence is that of Phosphoglucosamine mutase from Burkholderia pseudomallei (strain 668).